Consider the following 224-residue polypeptide: Large ribosomal subunit protein uL3 (224 aa).

The residue at position 159 (Gln159) is an N5-methylglutamine.

Belongs to the universal ribosomal protein uL3 family. As to quaternary structure, part of the 50S ribosomal subunit. Forms a cluster with proteins L14 and L19. In terms of processing, methylated by PrmB.

One of the primary rRNA binding proteins, it binds directly near the 3'-end of the 23S rRNA, where it nucleates assembly of the 50S subunit. The protein is Large ribosomal subunit protein uL3 of Herminiimonas arsenicoxydans.